The sequence spans 102 residues: Acid shock protein (102 aa).

Positions 1–21 are cleaved as a signal peptide; the sequence is MKKVLALVVAAAMGLSSAAFA. The segment covering 22 to 41 has biased composition (low complexity); that stretch reads AETATTPAPTATTTKAAPAK. Residues 22-58 constitute a propeptide that is removed on maturation; sequence AETATTPAPTATTTKAAPAKTTHHKKQHKAAPAQKAQ. The tract at residues 22 to 102 is disordered; the sequence is AETATTPAPT…PAKPAAQPAA (81 aa). The segment covering 80-90 has biased composition (basic residues); sequence AAKKHAKKHSH. The span at 91 to 102 shows a compositional bias: low complexity; the sequence is QQPAKPAAQPAA.

The protein belongs to the Asr family. Post-translationally, proteolytic processing gives rise to the active protein.

The protein resides in the periplasm. Required for growth and/or survival at acidic conditions. This chain is Acid shock protein, found in Escherichia coli O45:K1 (strain S88 / ExPEC).